Consider the following 344-residue polypeptide: Anthranilate phosphoribosyltransferase (344 aa).

5-phospho-alpha-D-ribose 1-diphosphate contacts are provided by residues Gly80, 83–84 (GD), Thr88, 90–93 (NVST), 108–116 (KHGNRSVSS), and Ser120. Position 80 (Gly80) interacts with anthranilate. Ser92 contributes to the Mg(2+) binding site. Asn111 lines the anthranilate pocket. Arg166 contacts anthranilate. Positions 225 and 226 each coordinate Mg(2+).

It belongs to the anthranilate phosphoribosyltransferase family. In terms of assembly, homodimer. Mg(2+) is required as a cofactor.

The catalysed reaction is N-(5-phospho-beta-D-ribosyl)anthranilate + diphosphate = 5-phospho-alpha-D-ribose 1-diphosphate + anthranilate. Its pathway is amino-acid biosynthesis; L-tryptophan biosynthesis; L-tryptophan from chorismate: step 2/5. Functionally, catalyzes the transfer of the phosphoribosyl group of 5-phosphorylribose-1-pyrophosphate (PRPP) to anthranilate to yield N-(5'-phosphoribosyl)-anthranilate (PRA). The polypeptide is Anthranilate phosphoribosyltransferase (Legionella pneumophila (strain Lens)).